The chain runs to 150 residues: D-aminoacyl-tRNA deacylase (150 aa).

A Gly-cisPro motif, important for rejection of L-amino acids motif is present at residues 136–137; the sequence is GP.

This sequence belongs to the DTD family. As to quaternary structure, homodimer.

The protein resides in the cytoplasm. It catalyses the reaction glycyl-tRNA(Ala) + H2O = tRNA(Ala) + glycine + H(+). It carries out the reaction a D-aminoacyl-tRNA + H2O = a tRNA + a D-alpha-amino acid + H(+). Functionally, an aminoacyl-tRNA editing enzyme that deacylates mischarged D-aminoacyl-tRNAs. Also deacylates mischarged glycyl-tRNA(Ala), protecting cells against glycine mischarging by AlaRS. Acts via tRNA-based rather than protein-based catalysis; rejects L-amino acids rather than detecting D-amino acids in the active site. By recycling D-aminoacyl-tRNA to D-amino acids and free tRNA molecules, this enzyme counteracts the toxicity associated with the formation of D-aminoacyl-tRNA entities in vivo and helps enforce protein L-homochirality. In Macrococcus caseolyticus (strain JCSC5402) (Macrococcoides caseolyticum), this protein is D-aminoacyl-tRNA deacylase.